Reading from the N-terminus, the 1391-residue chain is DNA-directed RNA polymerase subunit beta' (1391 aa).

4 residues coordinate Zn(2+): Cys-72, Cys-74, Cys-87, and Cys-90. Mg(2+) is bound by residues Asp-462, Asp-464, and Asp-466. 4 residues coordinate Zn(2+): Cys-816, Cys-890, Cys-897, and Cys-900.

This sequence belongs to the RNA polymerase beta' chain family. The RNAP catalytic core consists of 2 alpha, 1 beta, 1 beta' and 1 omega subunit. When a sigma factor is associated with the core the holoenzyme is formed, which can initiate transcription. Mg(2+) is required as a cofactor. Requires Zn(2+) as cofactor.

It catalyses the reaction RNA(n) + a ribonucleoside 5'-triphosphate = RNA(n+1) + diphosphate. DNA-dependent RNA polymerase catalyzes the transcription of DNA into RNA using the four ribonucleoside triphosphates as substrates. This Neisseria meningitidis serogroup A / serotype 4A (strain DSM 15465 / Z2491) protein is DNA-directed RNA polymerase subunit beta'.